A 325-amino-acid chain; its full sequence is Glutaminase (325 aa).

Ser-76, Asn-125, Glu-169, Asn-176, Tyr-200, Tyr-252, and Val-270 together coordinate substrate.

Belongs to the glutaminase family. In terms of assembly, homotetramer.

The catalysed reaction is L-glutamine + H2O = L-glutamate + NH4(+). This is Glutaminase from Clavibacter michiganensis subsp. michiganensis (strain NCPPB 382).